The primary structure comprises 83 residues: Large ribosomal subunit protein bL27 (83 aa).

A disordered region spans residues 1 to 21 (MAHKRSSGAGRNGRDSNPKYL).

It belongs to the bacterial ribosomal protein bL27 family.

This Kosmotoga olearia (strain ATCC BAA-1733 / DSM 21960 / TBF 19.5.1) protein is Large ribosomal subunit protein bL27.